Consider the following 565-residue polypeptide: Periplasmic trehalase (565 aa).

Residues 1–30 (MKSPAPSRPQKMALIPACIFLCFAALSVQA) form the signal peptide. Residues R152, 159–160 (WD), N196, 205–207 (RSQ), 277–279 (RPE), and G310 contribute to the substrate site. Residues D312 and E496 each act as proton donor/acceptor in the active site. Substrate is bound at residue E511. Residues 540–565 (DNVPATHPTVKSATTQPSTKEAQPTP) form a disordered region. The span at 548-565 (TVKSATTQPSTKEAQPTP) shows a compositional bias: polar residues.

The protein belongs to the glycosyl hydrolase 37 family. Monomer.

It localises to the periplasm. It catalyses the reaction alpha,alpha-trehalose + H2O = alpha-D-glucose + beta-D-glucose. In terms of biological role, provides the cells with the ability to utilize trehalose at high osmolarity by splitting it into glucose molecules that can subsequently be taken up by the phosphotransferase-mediated uptake system. This is Periplasmic trehalase from Shigella flexneri.